The sequence spans 728 residues: Catalase-peroxidase 1 (728 aa).

An N-terminal signal peptide occupies residues 1 to 22 (MDKTQSSQGKCPVMHGANSAVA). Residues 97 to 225 (WHSAGTYRVA…LAAVMMGLIY (129 aa)) constitute a cross-link (tryptophyl-tyrosyl-methioninium (Trp-Tyr) (with M-251)). Catalysis depends on histidine 98, which acts as the Proton acceptor. The tryptophyl-tyrosyl-methioninium (Tyr-Met) (with W-97) cross-link spans 225 to 251 (YVNPEGVDGKPDPLRTAQDVRVTFARM). Histidine 266 lines the heme b pocket.

Belongs to the peroxidase family. Peroxidase/catalase subfamily. Homodimer or homotetramer. Heme b is required as a cofactor. Formation of the three residue Trp-Tyr-Met cross-link is important for the catalase, but not the peroxidase activity of the enzyme.

It catalyses the reaction H2O2 + AH2 = A + 2 H2O. The enzyme catalyses 2 H2O2 = O2 + 2 H2O. Bifunctional enzyme with both catalase and broad-spectrum peroxidase activity. The protein is Catalase-peroxidase 1 of Shewanella sp. (strain ANA-3).